The following is a 202-amino-acid chain: Imidazoleglycerol-phosphate dehydratase (202 aa).

It belongs to the imidazoleglycerol-phosphate dehydratase family.

The protein resides in the cytoplasm. The enzyme catalyses D-erythro-1-(imidazol-4-yl)glycerol 3-phosphate = 3-(imidazol-4-yl)-2-oxopropyl phosphate + H2O. Its pathway is amino-acid biosynthesis; L-histidine biosynthesis; L-histidine from 5-phospho-alpha-D-ribose 1-diphosphate: step 6/9. The sequence is that of Imidazoleglycerol-phosphate dehydratase from Lactococcus lactis subsp. cremoris (strain SK11).